Reading from the N-terminus, the 412-residue chain is Argininosuccinate synthase (412 aa).

ATP-binding positions include 20 to 28 (AYSGGLDTS) and Ala48. Tyr100 and Ser105 together coordinate L-citrulline. Gly130 provides a ligand contact to ATP. 3 residues coordinate L-aspartate: Thr132, Asn136, and Asp137. Asn136 is a binding site for L-citrulline. L-citrulline contacts are provided by Arg140, Ser189, Ser198, Glu274, and Tyr286.

Belongs to the argininosuccinate synthase family. Type 1 subfamily. Homotetramer.

It localises to the cytoplasm. It catalyses the reaction L-citrulline + L-aspartate + ATP = 2-(N(omega)-L-arginino)succinate + AMP + diphosphate + H(+). Its pathway is amino-acid biosynthesis; L-arginine biosynthesis; L-arginine from L-ornithine and carbamoyl phosphate: step 2/3. The sequence is that of Argininosuccinate synthase from Shewanella pealeana (strain ATCC 700345 / ANG-SQ1).